The sequence spans 146 residues: Large ribosomal subunit protein uL15 (146 aa).

The span at 1 to 18 (MKLHELKPSEGSRKERNR) shows a compositional bias: basic and acidic residues. The segment at 1 to 57 (MKLHELKPSEGSRKERNRVGRGIGSGNGKTSGKGHKGQNARSGGGVRPGFEGGQMPL) is disordered. 2 stretches are compositionally biased toward gly residues: residues 21–31 (RGIGSGNGKTS) and 42–52 (SGGGVRPGFEG).

It belongs to the universal ribosomal protein uL15 family. In terms of assembly, part of the 50S ribosomal subunit.

Functionally, binds to the 23S rRNA. This chain is Large ribosomal subunit protein uL15, found in Bacillus pumilus (strain SAFR-032).